A 254-amino-acid polypeptide reads, in one-letter code: Triosephosphate isomerase (254 aa).

A substrate-binding site is contributed by 12-14 (NWK). The Electrophile role is filled by His99. Catalysis depends on Glu169, which acts as the Proton acceptor. Substrate contacts are provided by residues Gly175, Ser214, and 235–236 (GG).

The protein belongs to the triosephosphate isomerase family. Homodimer.

The protein localises to the cytoplasm. The catalysed reaction is D-glyceraldehyde 3-phosphate = dihydroxyacetone phosphate. It participates in carbohydrate biosynthesis; gluconeogenesis. Its pathway is carbohydrate degradation; glycolysis; D-glyceraldehyde 3-phosphate from glycerone phosphate: step 1/1. In terms of biological role, involved in the gluconeogenesis. Catalyzes stereospecifically the conversion of dihydroxyacetone phosphate (DHAP) to D-glyceraldehyde-3-phosphate (G3P). The polypeptide is Triosephosphate isomerase (Xanthobacter autotrophicus (strain ATCC BAA-1158 / Py2)).